An 86-amino-acid chain; its full sequence is Neurotoxin-like protein pMD18-NTL1/2/4/5 (86 aa).

An N-terminal signal peptide occupies residues Met-1–Thr-21. 4 disulfides stabilise this stretch: Cys-24-Cys-45, Cys-38-Cys-62, Cys-66-Cys-78, and Cys-79-Cys-84.

It belongs to the three-finger toxin family. Short-chain subfamily. Orphan group IX sub-subfamily. As to expression, expressed by the venom gland.

The protein resides in the secreted. The polypeptide is Neurotoxin-like protein pMD18-NTL1/2/4/5 (Bungarus multicinctus (Many-banded krait)).